The following is a 131-amino-acid chain: Peptide methionine sulfoxide reductase MsrB (131 aa).

Residues 8 to 130 form the MsrB domain; the sequence is DAEWRAQLTD…NSVCLDLKRS (123 aa). Zn(2+) is bound by residues cysteine 47, cysteine 50, cysteine 96, and cysteine 99. The active-site Nucleophile is cysteine 119.

Belongs to the MsrB Met sulfoxide reductase family. It depends on Zn(2+) as a cofactor.

The catalysed reaction is L-methionyl-[protein] + [thioredoxin]-disulfide + H2O = L-methionyl-(R)-S-oxide-[protein] + [thioredoxin]-dithiol. The protein is Peptide methionine sulfoxide reductase MsrB of Alkalilimnicola ehrlichii (strain ATCC BAA-1101 / DSM 17681 / MLHE-1).